Here is a 718-residue protein sequence, read N- to C-terminus: K(+)-insensitive pyrophosphate-energized proton pump (718 aa).

The next 6 membrane-spanning stretches (helical) occupy residues 6-26 (AVLV…IWAI), 61-81 (IAIV…LNAA), 83-103 (GFLI…HVSV), 112-132 (AASL…AITG), 133-153 (LLVA…LTVW), and 168-188 (VSLG…GGIF). Position 190 (lysine 190) interacts with substrate. The Mg(2+) site is built by aspartate 193, aspartate 197, asparagine 220, and aspartate 223. The next 6 helical transmembrane spans lie at 235 to 255 (LFET…IFFH), 265 to 285 (LYPL…TFFV), 300 to 320 (GLIA…TLTV), 335 to 355 (GTNL…IVVI), 385 to 405 (GLAV…GGII), and 413 to 433 (LFGT…IVAL). Aspartate 441 contacts Mg(2+). The next 4 membrane-spanning stretches (helical) occupy residues 472–492 (AVTK…LFAA), 524–544 (YVVA…GMAM), 593–613 (IIPS…VLLI), and 620–640 (AFAA…FVAI). Positions 650, 682, and 686 each coordinate Ca(2+). Lysine 689 lines the substrate pocket. A helical transmembrane segment spans residues 695–715 (AVNPAIKITNIVALLLLAVLA).

The protein belongs to the H(+)-translocating pyrophosphatase (TC 3.A.10) family. K(+)-insensitive subfamily. As to quaternary structure, homodimer. It depends on Mg(2+) as a cofactor.

It localises to the cell inner membrane. The enzyme catalyses diphosphate + H2O + H(+)(in) = 2 phosphate + 2 H(+)(out). In terms of biological role, proton pump that utilizes the energy of pyrophosphate hydrolysis as the driving force for proton movement across the membrane. Generates a proton motive force. The chain is K(+)-insensitive pyrophosphate-energized proton pump from Brucella melitensis biotype 1 (strain ATCC 23456 / CCUG 17765 / NCTC 10094 / 16M).